The sequence spans 579 residues: Glypican-3 (579 aa).

An N-terminal signal peptide occupies residues 1–24 (MAGTVRTACLLVAMLLGLGCLGQA). Position 25 is a pyrrolidone carboxylic acid (Gln-25). Cystine bridges form between Cys-34/Cys-71, Cys-64/Cys-261, Cys-72/Cys-264, Cys-196/Cys-348, Cys-251/Cys-284, Cys-273/Cys-421, and Cys-277/Cys-409. Residues Asn-123 and Asn-240 are each glycosylated (N-linked (GlcNAc...) asparagine). Ser-351 carries the post-translational modification Phosphoserine. N-linked (GlcNAc...) asparagine glycosylation is present at Asn-417. O-linked (Xyl...) (glycosaminoglycan) serine glycosylation is found at Ser-494 and Ser-508. The segment at 533 to 552 (DAPGNKQHGNQKDNEITTSH) is disordered. The GPI-anchor amidated serine moiety is linked to residue Ser-553. Positions 554 to 579 (VGNMPSPLKILISVAIYVACFFFLVH) are cleaved as a propeptide — removed in mature form.

It belongs to the glypican family. In terms of assembly, heterodimer; disulfide-linked. Cleavage by a furin-like convertase results in production of alpha and beta chains which form a disulfide-linked heterodimer. Interacts with DPP4. Interacts with FGF2. Interacts with WNT5A. Also interacts with WNT3A and WNT7B. Interacts with hedgehog protein SHH; the heparan sulfate chains are not required for the interaction. Also interacts with hedgehog protein IHH. Interacts with CD81. Interacts with Wnt receptors FZD4, FZD7 and FZD8; the heparan sulfate chains are required for the interaction. In terms of processing, O-glycosylated; contains heparan sulfate and/or chondroitin sulfate. Cleaved intracellularly by a furin-like convertase to generate 2 subunits, alpha and beta, which remain associated through disulfide bonds and are associated with the cell surface via the GPI-anchor. This processing is essential for its role in inhibition of hedgehog signaling. A second proteolytic event may result in cleavage of the protein on the cell surface, separating it from the GPI-anchor and leading to its shedding from the cell surface. In the developing limb, absent from the apical epidermal ridge at 11 dpc but highly expressed in the underlying mesenchyme. Expression in the mesenchyme at this stage is asymmetric with highest levels in the regions of the distal mesenchyme within the progress zone and within the proximal anterior and posterior limb bud. At later developmental stages including 12.5 and 13.5 dpc, expression is restricted to the interdigital webs and the regions of chondrocytic differentiation of the developing bones. In the embryonic kidney, expressed in both the ureteric bud and mesenchymal cells as early as 13.5 dpc. Expression at 16.5 dpc is similar to that at 13.5 dpc but decreases by 18.5 dpc.

It localises to the cell membrane. Functionally, cell surface proteoglycan. Negatively regulates the hedgehog signaling pathway when attached via the GPI-anchor to the cell surface by competing with the hedgehog receptor PTC1 for binding to hedgehog proteins. Binding to the hedgehog protein SHH triggers internalization of the complex by endocytosis and its subsequent lysosomal degradation. Positively regulates the canonical Wnt signaling pathway by binding to the Wnt receptor Frizzled and stimulating the binding of the Frizzled receptor to Wnt ligands. Positively regulates the non-canonical Wnt signaling pathway. Binds to CD81 which decreases the availability of free CD81 for binding to the transcriptional repressor HHEX, resulting in nuclear translocation of HHEX and transcriptional repression. Inhibits the dipeptidyl peptidase activity of DPP4. Plays a role in limb patterning and skeletal development by controlling the cellular response to BMP4. Modulates the effects of growth factors BMP2, BMP7 and FGF7 on renal branching morphogenesis. Required for coronary vascular development. Plays a role in regulating cell movements during gastrulation. In Mus musculus (Mouse), this protein is Glypican-3 (Gpc3).